A 701-amino-acid chain; its full sequence is DNA ligase (701 aa).

Residues 43–47 (DADYD), 92–93 (SL), and glutamate 126 each bind NAD(+). Lysine 128 serves as the catalytic N6-AMP-lysine intermediate. NAD(+) contacts are provided by arginine 149, glutamate 186, lysine 302, and lysine 326. Cysteine 417, cysteine 420, cysteine 440, and cysteine 446 together coordinate Zn(2+). Positions 622 to 701 (ETGSPVTGKT…DEWLALIGET (80 aa)) constitute a BRCT domain.

The protein belongs to the NAD-dependent DNA ligase family. LigA subfamily. Mg(2+) serves as cofactor. It depends on Mn(2+) as a cofactor.

It catalyses the reaction NAD(+) + (deoxyribonucleotide)n-3'-hydroxyl + 5'-phospho-(deoxyribonucleotide)m = (deoxyribonucleotide)n+m + AMP + beta-nicotinamide D-nucleotide.. Functionally, DNA ligase that catalyzes the formation of phosphodiester linkages between 5'-phosphoryl and 3'-hydroxyl groups in double-stranded DNA using NAD as a coenzyme and as the energy source for the reaction. It is essential for DNA replication and repair of damaged DNA. The polypeptide is DNA ligase (Hyphomonas neptunium (strain ATCC 15444)).